Consider the following 1050-residue polypeptide: MSKFFIDRPIFAWVIALVIMLVGALSILKLPINQYPSIAPPAIAIAVTYPGASAQTVQDTVVQVIEQQLNGIDNLRYVSSESNSDGSMTITATFEQGTNPDTAQVQVQNKLNLATPLLPQEVQQQGIRVTKAVKNFLLVIGLVSEDGSMTKDDLANYIVSNMQDPISRTAGVGDFQVFGAQYAMRIWLDPAKLNKFQLTPVDVKTAVAAQNVQVSSGQLGGLPALPGTQLNATIIGKTRLQTAEQFESILLKVNKDGSQVRLGDVAQVGLGGENYAVSAQFNGKPASGLAVKLATGANALDTAKALRETIKGLEPFFPPGVKAVFPYDTTPVVTESISGVIHTLIEAVVLVFLVMYLFLQNFRATIITTMTVPVVLLGTFGILAAAGFSINTLTMFAMVLAIGLLVDDAIVVVENVERVMSEEGLPPKEATKRSMEQIQGALVGIALVLSAVLLPMAFFGGSTGVIYRQFSITIVSAMGLSVLVALIFTPALCATMLKPLKKGEHHTAKGGFFGWFNRNFDRSVNGYERSVGTILRNKVPFLLGYALIVVGMIWLFARIPTAFLPEEDQGVLFAQVQTPAGSSAERTQVVVDQMREYLLKDEADTVSSVFTVNGFNFAGRGQSSGMAFIMLKPWDERSKENSVFALAQRAQQHFFTFRDAMVFAFAPPAVLELGNATGFDVFLQDRGGVGHAKLMEARNQFLAKAAQSKILSAVRPNGLNDEPQYQLTIDDERASALGVTIADINNTLSIALGASYVNDFIDRGRVKKVYIQGEPSARMSPEDLQKWYVRNGAGEMVPFSSFAKGEWTYGSPKLSRYNGVEAMEILGAPAPGYSTGEAMAEVERIAGELPSGIGFSWTGMSYEEKLSGSQMPALFALSVLFVFLCLAALYESWSIPIAVVLVVPLGIIGALIATSLRGLSNDVYFLVGLLTTIGLAAKNAILIVEFAKELHEQGRSLYDAAIEACRMRLRPIIMTSLAFILGVVPLTIASGAGAGSQHAIGTGVIGGMISATVLAIFWVPLFFVAVSSLFGSKEPEKDVTPENPRYEAGQ.

Transmembrane regions (helical) follow at residues 10–30, 339–359, 370–390, 393–413, 440–460, 472–492, 539–559, 871–891, 893–913, 923–943, 972–992, and 1004–1024; these read IFAW…ILKL, GVIH…YLFL, MTVP…GFSI, LTMF…IVVV, GALV…AFFG, ITIV…TPAL, VPFL…FARI, MPAL…ALYE, WSIP…ALIA, VYFL…AILI, IIMT…ASGA, and VIGG…LFFV.

Belongs to the resistance-nodulation-cell division (RND) (TC 2.A.6) family.

The protein localises to the cell inner membrane. The inner membrane transporter component of an antibiotic efflux pump. Confers resistance to numerous structurally unrelated antibiotics such as carbenicillin, chloramphenicol, erythromycin, novobiocin, streptomycin and tetracycline. Is not involved in organic solvent efflux. This chain is Antibiotic efflux pump membrane transporter ArpB (arpB), found in Pseudomonas putida (Arthrobacter siderocapsulatus).